The primary structure comprises 516 residues: L-amino-acid oxidase (516 aa).

A signal peptide spans 1–18; it reads MNVFFMFSLLFLAALGSC. A disulfide bond links Cys-28 and Cys-191. FAD contacts are provided by residues 61 to 62, 81 to 82, Arg-89, and 105 to 108; these read MS, EA, and GPMR. Residue Arg-108 coordinates substrate. N-linked (GlcNAc...) asparagine glycosylation occurs at Asn-190. Position 241 (His-241) interacts with substrate. Val-279 is a binding site for FAD. An intrachain disulfide couples Cys-349 to Cys-430. N-linked (GlcNAc...) asparagine glycosylation occurs at Asn-379. Tyr-390 is a substrate binding site. FAD-binding positions include Glu-475, 481–486, and 482–487; these read HGWIDS and GWIDSS. Substrate is bound by residues 481–482 and 482–483; these read HG and GW.

Belongs to the flavin monoamine oxidase family. FIG1 subfamily. In terms of assembly, homodimer; non-covalently linked. FAD is required as a cofactor. N-glycosylated. In terms of tissue distribution, expressed by the venom gland.

Its subcellular location is the secreted. The catalysed reaction is an L-alpha-amino acid + O2 + H2O = a 2-oxocarboxylate + H2O2 + NH4(+). Its function is as follows. Catalyzes an oxidative deamination of predominantly hydrophobic and aromatic L-amino acids, thus producing hydrogen peroxide that may contribute to the diverse toxic effects of this enzyme. Exhibits diverse biological activities, such as hemorrhage, hemolysis, edema, apoptosis of vascular endothelial cells or tumor cell lines, antibacterial and antiparasitic activities, as well as regulation of platelet aggregation. Effects of snake L-amino oxidases on platelets are controversial, since they either induce aggregation or inhibit agonist-induced aggregation. These different effects are probably due to different experimental conditions. Displays dose-dependent inhibition on HIV-1 infection and replication. This is L-amino-acid oxidase from Trimeresurus stejnegeri (Chinese green tree viper).